The following is a 200-amino-acid chain: 3-isopropylmalate dehydratase small subunit (200 aa).

It belongs to the LeuD family. LeuD type 1 subfamily. Heterodimer of LeuC and LeuD.

It carries out the reaction (2R,3S)-3-isopropylmalate = (2S)-2-isopropylmalate. It participates in amino-acid biosynthesis; L-leucine biosynthesis; L-leucine from 3-methyl-2-oxobutanoate: step 2/4. Catalyzes the isomerization between 2-isopropylmalate and 3-isopropylmalate, via the formation of 2-isopropylmaleate. This Erythrobacter litoralis (strain HTCC2594) protein is 3-isopropylmalate dehydratase small subunit.